A 382-amino-acid chain; its full sequence is MSLNIFWFLPTHGDGKYLGTAEGARAVDHGYLAQIAQAADRLGYGGVLIPTGRSCEDSWLVAASLIPVTQNLKFLVALRPGIISPTVAARQAATLDRLSNARALFNLVTGGDPDELAGDGLHLSHAERYEASVEFTRIWRRVLEGETVDYDGKHIQVKGAKLLYPPIQQPRPPLYFGGSSDAAQDLAAEQVELYLTWGEPPAAVAEKIAQVREKAARQGREVRFGIRLHVIVRETNEEAWAAADRLISHLDQDTIDRAQASLARFDSVGQQRMAALHGGKTDNLEVSPNLWAGVGLVRGGAGTALVGDGPTVAARVREYAELGIDTFIFSGYPHLEESYRVAELLFPHLDVAPPARPESRGYVSPFGEMISSDILPKAAAAS.

It belongs to the SsuD family.

It catalyses the reaction an alkanesulfonate + FMNH2 + O2 = an aldehyde + FMN + sulfite + H2O + 2 H(+). Catalyzes the desulfonation of aliphatic sulfonates. The protein is Alkanesulfonate monooxygenase of Ectopseudomonas mendocina (strain ymp) (Pseudomonas mendocina).